A 166-amino-acid polypeptide reads, in one-letter code: Small ribosomal subunit protein uS5 (166 aa).

The S5 DRBM domain maps to leucine 11–valine 74.

This sequence belongs to the universal ribosomal protein uS5 family. In terms of assembly, part of the 30S ribosomal subunit. Contacts proteins S4 and S8.

In terms of biological role, with S4 and S12 plays an important role in translational accuracy. Its function is as follows. Located at the back of the 30S subunit body where it stabilizes the conformation of the head with respect to the body. The protein is Small ribosomal subunit protein uS5 of Aeromonas hydrophila subsp. hydrophila (strain ATCC 7966 / DSM 30187 / BCRC 13018 / CCUG 14551 / JCM 1027 / KCTC 2358 / NCIMB 9240 / NCTC 8049).